The following is a 515-amino-acid chain: Endoglucanase 23 (515 aa).

The N-terminal stretch at 1–29 is a signal peptide; that stretch reads MALLSAPVRRRRSRVRVLLVCCCLLLALA. Residue aspartate 95 is the Nucleophile of the active site. N-linked (GlcNAc...) asparagine glycans are attached at residues asparagine 178, asparagine 375, and asparagine 384. Residue histidine 426 is part of the active site. N-linked (GlcNAc...) asparagine glycosylation is present at asparagine 452. Active-site residues include aspartate 477 and glutamate 486.

Belongs to the glycosyl hydrolase 9 (cellulase E) family.

It is found in the secreted. It carries out the reaction Endohydrolysis of (1-&gt;4)-beta-D-glucosidic linkages in cellulose, lichenin and cereal beta-D-glucans.. This is Endoglucanase 23 (GLU12) from Oryza sativa subsp. japonica (Rice).